The following is a 402-amino-acid chain: Probable sugar efflux transporter (402 aa).

12 helical membrane-spanning segments follow: residues Val15–Met35, Gly51–Ala71, Leu84–Leu104, Met109–Ile129, Gln137–Gly157, Val168–Leu188, Pro209–Tyr229, Asn245–Phe265, Phe276–Glu296, Ala297–Leu317, Val333–Gly353, and Ile365–Leu385.

Belongs to the major facilitator superfamily. SotB (TC 2.A.1.2) family.

Its subcellular location is the cell inner membrane. Functionally, involved in the efflux of sugars. The physiological role may be the reduction of the intracellular concentration of toxic sugars or sugar metabolites. The sequence is that of Probable sugar efflux transporter from Haemophilus influenzae (strain 86-028NP).